The primary structure comprises 241 residues: Pyridoxine 5'-phosphate synthase (241 aa).

Residue Asn-7 participates in 3-amino-2-oxopropyl phosphate binding. 9–10 (DH) contributes to the 1-deoxy-D-xylulose 5-phosphate binding site. 3-amino-2-oxopropyl phosphate is bound at residue Arg-18. Residue His-43 is the Proton acceptor of the active site. Arg-45 and His-50 together coordinate 1-deoxy-D-xylulose 5-phosphate. Glu-70 acts as the Proton acceptor in catalysis. Residue Thr-100 participates in 1-deoxy-D-xylulose 5-phosphate binding. His-191 functions as the Proton donor in the catalytic mechanism. Residues Gly-192 and 213 to 214 (GH) each bind 3-amino-2-oxopropyl phosphate.

This sequence belongs to the PNP synthase family. As to quaternary structure, homooctamer; tetramer of dimers.

The protein localises to the cytoplasm. It carries out the reaction 3-amino-2-oxopropyl phosphate + 1-deoxy-D-xylulose 5-phosphate = pyridoxine 5'-phosphate + phosphate + 2 H2O + H(+). It participates in cofactor biosynthesis; pyridoxine 5'-phosphate biosynthesis; pyridoxine 5'-phosphate from D-erythrose 4-phosphate: step 5/5. In terms of biological role, catalyzes the complicated ring closure reaction between the two acyclic compounds 1-deoxy-D-xylulose-5-phosphate (DXP) and 3-amino-2-oxopropyl phosphate (1-amino-acetone-3-phosphate or AAP) to form pyridoxine 5'-phosphate (PNP) and inorganic phosphate. The polypeptide is Pyridoxine 5'-phosphate synthase (Maridesulfovibrio salexigens (strain ATCC 14822 / DSM 2638 / NCIMB 8403 / VKM B-1763) (Desulfovibrio salexigens)).